The following is a 581-amino-acid chain: Pyridine nucleotide-disulfide oxidoreductase domain-containing protein 2 (581 aa).

Position 38-71 (38-71 (VVIGAGHNGLVAAAYLQRLGVNTAVFERRHVIGG)) interacts with FAD.

The protein belongs to the carotenoid/retinoid oxidoreductase family. In terms of assembly, interacts with COX5B; this interaction may contribute to localize PYROXD2 to the inner face of the inner mitochondrial membrane.

Its subcellular location is the mitochondrion matrix. In terms of biological role, probable oxidoreductase that may play a role as regulator of mitochondrial function. In Rattus norvegicus (Rat), this protein is Pyridine nucleotide-disulfide oxidoreductase domain-containing protein 2.